A 485-amino-acid polypeptide reads, in one-letter code: CCA-adding enzyme (485 aa).

ATP-binding residues include serine 53 and arginine 56. CTP-binding residues include serine 53 and arginine 56. Residues aspartate 65, aspartate 67, and aspartate 124 each coordinate Mg(2+). Positions 146, 164, and 173 each coordinate ATP. CTP contacts are provided by histidine 146, lysine 164, and tyrosine 173.

It belongs to the tRNA nucleotidyltransferase/poly(A) polymerase family. Archaeal CCA-adding enzyme subfamily. In terms of assembly, homodimer. Mg(2+) serves as cofactor.

It catalyses the reaction a tRNA precursor + 2 CTP + ATP = a tRNA with a 3' CCA end + 3 diphosphate. The enzyme catalyses a tRNA with a 3' CCA end + 2 CTP + ATP = a tRNA with a 3' CCACCA end + 3 diphosphate. Its function is as follows. Catalyzes the addition and repair of the essential 3'-terminal CCA sequence in tRNAs without using a nucleic acid template. Adds these three nucleotides in the order of C, C, and A to the tRNA nucleotide-73, using CTP and ATP as substrates and producing inorganic pyrophosphate. tRNA 3'-terminal CCA addition is required both for tRNA processing and repair. Also involved in tRNA surveillance by mediating tandem CCA addition to generate a CCACCA at the 3' terminus of unstable tRNAs. While stable tRNAs receive only 3'-terminal CCA, unstable tRNAs are marked with CCACCA and rapidly degraded. The protein is CCA-adding enzyme of Methanopyrus kandleri (strain AV19 / DSM 6324 / JCM 9639 / NBRC 100938).